The primary structure comprises 829 residues: Leucine--tRNA ligase (829 aa).

The short motif at 40–50 (PYPSGNIHMGH) is the 'HIGH' region element. A 'KMSKS' region motif is present at residues 581 to 585 (KMSKS). Residue lysine 584 participates in ATP binding.

This sequence belongs to the class-I aminoacyl-tRNA synthetase family.

The protein resides in the cytoplasm. It carries out the reaction tRNA(Leu) + L-leucine + ATP = L-leucyl-tRNA(Leu) + AMP + diphosphate. The chain is Leucine--tRNA ligase from Nitratidesulfovibrio vulgaris (strain DP4) (Desulfovibrio vulgaris).